Consider the following 251-residue polypeptide: Triosephosphate isomerase (251 aa).

9–11 is a binding site for substrate; sequence NWK. H95 serves as the catalytic Electrophile. The active-site Proton acceptor is E167. Residues G173, S212, and 233–234 contribute to the substrate site; that span reads GG.

Belongs to the triosephosphate isomerase family. As to quaternary structure, homodimer.

The protein resides in the cytoplasm. The enzyme catalyses D-glyceraldehyde 3-phosphate = dihydroxyacetone phosphate. It participates in carbohydrate biosynthesis; gluconeogenesis. It functions in the pathway carbohydrate degradation; glycolysis; D-glyceraldehyde 3-phosphate from glycerone phosphate: step 1/1. Functionally, involved in the gluconeogenesis. Catalyzes stereospecifically the conversion of dihydroxyacetone phosphate (DHAP) to D-glyceraldehyde-3-phosphate (G3P). This is Triosephosphate isomerase from Pseudomonas paraeruginosa (strain DSM 24068 / PA7) (Pseudomonas aeruginosa (strain PA7)).